Reading from the N-terminus, the 58-residue chain is MGLGDKIRNTAEKASGKVKEATGKATDNEKLEAEGKTDQFKGNAKNTVENAKDTLRGN.

The segment covering 1-39 (MGLGDKIRNTAEKASGKVKEATGKATDNEKLEAEGKTDQ) has biased composition (basic and acidic residues). The tract at residues 1-58 (MGLGDKIRNTAEKASGKVKEATGKATDNEKLEAEGKTDQFKGNAKNTVENAKDTLRGN) is disordered.

It belongs to the UPF0337 (CsbD) family.

This is UPF0337 protein CE1672 from Corynebacterium efficiens (strain DSM 44549 / YS-314 / AJ 12310 / JCM 11189 / NBRC 100395).